Here is a 403-residue protein sequence, read N- to C-terminus: Tryptophan synthase beta chain (403 aa).

K90 carries the N6-(pyridoxal phosphate)lysine modification.

It belongs to the TrpB family. Tetramer of two alpha and two beta chains. The cofactor is pyridoxal 5'-phosphate.

It carries out the reaction (1S,2R)-1-C-(indol-3-yl)glycerol 3-phosphate + L-serine = D-glyceraldehyde 3-phosphate + L-tryptophan + H2O. It participates in amino-acid biosynthesis; L-tryptophan biosynthesis; L-tryptophan from chorismate: step 5/5. In terms of biological role, the beta subunit is responsible for the synthesis of L-tryptophan from indole and L-serine. The protein is Tryptophan synthase beta chain of Leifsonia xyli subsp. xyli (strain CTCB07).